Here is a 67-residue protein sequence, read N- to C-terminus: ATP synthase protein 8 (67 aa).

Residues 8 to 24 (TWFITITSMTITLFIMF) form a helical membrane-spanning segment. At lysine 54 the chain carries N6-acetyllysine; alternate. The residue at position 54 (lysine 54) is an N6-succinyllysine; alternate. Lysine 57 is subject to N6-acetyllysine.

Belongs to the ATPase protein 8 family. F-type ATPases have 2 components, CF(1) - the catalytic core - and CF(0) - the membrane proton channel. Component of an ATP synthase complex composed of ATP5PB, ATP5MC1, ATP5F1E, ATP5PD, ATP5ME, ATP5PF, ATP5MF, MT-ATP6, MT-ATP8, ATP5F1A, ATP5F1B, ATP5F1D, ATP5F1C, ATP5PO, ATP5MG, ATP5MK and ATP5MJ. Interacts with PRICKLE3.

Its subcellular location is the mitochondrion membrane. In terms of biological role, mitochondrial membrane ATP synthase (F(1)F(0) ATP synthase or Complex V) produces ATP from ADP in the presence of a proton gradient across the membrane which is generated by electron transport complexes of the respiratory chain. F-type ATPases consist of two structural domains, F(1) - containing the extramembraneous catalytic core and F(0) - containing the membrane proton channel, linked together by a central stalk and a peripheral stalk. During catalysis, ATP synthesis in the catalytic domain of F(1) is coupled via a rotary mechanism of the central stalk subunits to proton translocation. Part of the complex F(0) domain. Minor subunit located with subunit a in the membrane. This chain is ATP synthase protein 8 (MT-ATP8), found in Rhinoceros unicornis (Greater Indian rhinoceros).